The chain runs to 136 residues: Large ribosomal subunit protein eL27 (136 aa).

The KOW domain occupies Met5–His40. 2 positions are modified to N6-acetyllysine: Lys27 and Lys93.

It belongs to the eukaryotic ribosomal protein eL27 family. Component of the large ribosomal subunit. Interacts with RRP1B. Component of the large ribosomal subunit. Interacts with RRP1B. Interacts with DHX33.

Its subcellular location is the cytoplasm. The protein resides in the cytosol. The protein localises to the rough endoplasmic reticulum. Component of the large ribosomal subunit. Required for proper rRNA processing and maturation of 28S and 5.8S rRNAs. The polypeptide is Large ribosomal subunit protein eL27 (RPL27) (Bos taurus (Bovine)).